Reading from the N-terminus, the 310-residue chain is GPN-loop GTPase 2 (310 aa).

N-acetylalanine is present on Ala2. 19 to 24 (GSGKTT) is a GTP binding site. The short motif at 76–78 (GPN) is the Gly-Pro-Asn (GPN)-loop; involved in dimer interface element. A GTP-binding site is contributed by 178-181 (SKMD).

It belongs to the GPN-loop GTPase family. As to quaternary structure, heterodimers with GPN1 or GPN3. Binds to RNA polymerase II (RNAPII).

Functionally, small GTPase required for proper localization of RNA polymerase II and III (RNAPII and RNAPIII). May act at an RNAP assembly step prior to nuclear import. This Bos taurus (Bovine) protein is GPN-loop GTPase 2 (GPN2).